Here is a 353-residue protein sequence, read N- to C-terminus: UDP-N-acetylglucosamine--N-acetylmuramyl-(pentapeptide) pyrophosphoryl-undecaprenol N-acetylglucosamine transferase (353 aa).

Residues 15–17, Asn-125, Arg-165, Ser-186, and Gln-286 each bind UDP-N-acetyl-alpha-D-glucosamine; that span reads TGG.

Belongs to the glycosyltransferase 28 family. MurG subfamily.

The protein localises to the cell inner membrane. The enzyme catalyses di-trans,octa-cis-undecaprenyl diphospho-N-acetyl-alpha-D-muramoyl-L-alanyl-D-glutamyl-meso-2,6-diaminopimeloyl-D-alanyl-D-alanine + UDP-N-acetyl-alpha-D-glucosamine = di-trans,octa-cis-undecaprenyl diphospho-[N-acetyl-alpha-D-glucosaminyl-(1-&gt;4)]-N-acetyl-alpha-D-muramoyl-L-alanyl-D-glutamyl-meso-2,6-diaminopimeloyl-D-alanyl-D-alanine + UDP + H(+). It functions in the pathway cell wall biogenesis; peptidoglycan biosynthesis. Its function is as follows. Cell wall formation. Catalyzes the transfer of a GlcNAc subunit on undecaprenyl-pyrophosphoryl-MurNAc-pentapeptide (lipid intermediate I) to form undecaprenyl-pyrophosphoryl-MurNAc-(pentapeptide)GlcNAc (lipid intermediate II). This Chlamydia muridarum (strain MoPn / Nigg) protein is UDP-N-acetylglucosamine--N-acetylmuramyl-(pentapeptide) pyrophosphoryl-undecaprenol N-acetylglucosamine transferase.